Here is a 337-residue protein sequence, read N- to C-terminus: Visual pigment-like receptor peropsin (337 aa).

Residues 1–26 (MLSEASDFNSSGSRSEGSVFSRTEHS) are Extracellular-facing. N-linked (GlcNAc...) asparagine glycosylation occurs at Asn-9. A helical transmembrane segment spans residues 27–49 (VIAAYLIVAGITSILSNVVVLGI). The Cytoplasmic segment spans residues 50 to 61 (FIKYKELRTPTN). Residues 62 to 87 (AVIINLAFTDIGVSSIGYPMSAASDL) traverse the membrane as a helical segment. The Extracellular portion of the chain corresponds to 88–101 (HGSWKFGHAGCQIY). Cys-98 and Cys-175 are joined by a disulfide. A helical transmembrane segment spans residues 102 to 121 (AGLNIFFGMVSIGLLTVVAM). Topologically, residues 122–140 (DRYLTISCPDVGRRMTTNT) are cytoplasmic. A helical membrane pass occupies residues 141-164 (YLSMILGAWINGLFWALMPIIGWA). The Extracellular segment spans residues 165 to 188 (SYAPDPTGATCTINWRNNDTSFVS). An N-linked (GlcNAc...) asparagine glycan is attached at Asn-182. A helical membrane pass occupies residues 189–212 (YTMMVIVVNFIVPLTVMFYCYYHV). The Cytoplasmic portion of the chain corresponds to 213–240 (SRSLRLYAASDCTAHLHRDWADQADVTK). A helical membrane pass occupies residues 241-264 (MSVIMILMFLLAWSPYSIVCLWAC). The Extracellular segment spans residues 265-272 (FGNPKKIP). A helical transmembrane segment spans residues 273 to 297 (PSMAIIAPLFAKSSTFYNPCIYVAA). Lys-284 bears the N6-(retinylidene)lysine mark. The Cytoplasmic segment spans residues 298–337 (HKKFRKAMLAMFKCQPHLAVPEPSTLPMDMPQSSLAPVRI).

The protein belongs to the G-protein coupled receptor 1 family. Opsin subfamily. In terms of tissue distribution, found only in the eye, where it is localized to the retinal pigment epithelium (RPE). In the RPE, it is localized to the microvilli that surround the photoreceptor outer segments.

The protein resides in the membrane. Functionally, may play a role in rpe physiology either by detecting light directly or by monitoring the concentration of retinoids or other photoreceptor-derived compounds. The polypeptide is Visual pigment-like receptor peropsin (Rrh) (Mus musculus (Mouse)).